The chain runs to 366 residues: S-adenosylmethionine synthase 1 (366 aa).

K(+) is bound at residue E18. L-methionine contacts are provided by E31 and Q74. Residues 142 to 144 (DGN), 210 to 213 (SGRF), D221, 227 to 228 (RK), A244, K248, and K252 each bind ATP. Residue D221 coordinates L-methionine. Residue K252 coordinates L-methionine.

This sequence belongs to the AdoMet synthase family. In terms of assembly, homotetramer. Mn(2+) serves as cofactor. It depends on Mg(2+) as a cofactor. Requires Co(2+) as cofactor. K(+) is required as a cofactor.

Its subcellular location is the cytoplasm. The enzyme catalyses L-methionine + ATP + H2O = S-adenosyl-L-methionine + phosphate + diphosphate. The protein operates within amino-acid biosynthesis; S-adenosyl-L-methionine biosynthesis; S-adenosyl-L-methionine from L-methionine: step 1/1. Catalyzes the formation of S-adenosylmethionine from methionine and ATP. The reaction comprises two steps that are both catalyzed by the same enzyme: formation of S-adenosylmethionine (AdoMet) and triphosphate, and subsequent hydrolysis of the triphosphate. In Pisum sativum (Garden pea), this protein is S-adenosylmethionine synthase 1 (SAMS1).